Consider the following 926-residue polypeptide: Ubiquitin carboxyl-terminal hydrolase 4 (926 aa).

Residues 205-328 enclose the Rhodanese domain; it reads SQMEILLIDI…WLKSNYGSQV (124 aa). A Phosphoserine modification is found at S443. In terms of domain architecture, USP spans 562 to 923; it reads VGLENLGNSC…NAYVLFYHRV (362 aa). The active-site Nucleophile is the C571. H880 functions as the Proton acceptor in the catalytic mechanism.

This sequence belongs to the peptidase C19 family. As to quaternary structure, interacts with BRO1, RFU1 and VPS32. Associates with the 26S proteasome.

The protein resides in the cytoplasm. It localises to the late endosome membrane. It carries out the reaction Thiol-dependent hydrolysis of ester, thioester, amide, peptide and isopeptide bonds formed by the C-terminal Gly of ubiquitin (a 76-residue protein attached to proteins as an intracellular targeting signal).. Its activity is regulated as follows. RFU1 is an inhibitor of deubiquitination activity. Its function is as follows. Ubiquitin thioesterase that acts at the late endosome/prevacuolar compartment to recover ubiquitin from ubiquitinated membrane proteins en route to the vacuole. Also removes ubiquitin from soluble proteins targeted to proteasomes. Is essential to maintain a normal level of free ubiquitin. Involved in the ammonium-induced down-regulation of the GAP1 permease and the UME3 destruction in response to oxidative stress. Has a role in the RAD9 checkpoint response to TOP1 poisons. Required for promoting coordination of DNA replication and avoids DNA overreplication. This chain is Ubiquitin carboxyl-terminal hydrolase 4 (DOA4), found in Saccharomyces cerevisiae (strain YJM789) (Baker's yeast).